An 881-amino-acid chain; its full sequence is Phosphoenolpyruvate carboxylase (881 aa).

Catalysis depends on residues H142 and K547.

This sequence belongs to the PEPCase type 1 family. The cofactor is Mg(2+).

The enzyme catalyses oxaloacetate + phosphate = phosphoenolpyruvate + hydrogencarbonate. Forms oxaloacetate, a four-carbon dicarboxylic acid source for the tricarboxylic acid cycle. The protein is Phosphoenolpyruvate carboxylase of Hahella chejuensis (strain KCTC 2396).